Here is a 697-residue protein sequence, read N- to C-terminus: Methionine--tRNA ligase (697 aa).

A 'HIGH' region motif is present at residues 12-22 (PYANGHFHIGH). Zn(2+) is bound by residues cysteine 143, cysteine 146, cysteine 156, and cysteine 159. Positions 342–346 (KMSKS) match the 'KMSKS' region motif. Lysine 345 is a binding site for ATP. Residues 557-577 (FEPPAEPSPQTSPAAAGAGAV) form a disordered region. One can recognise a tRNA-binding domain in the interval 591–697 (DFTKIDLRLA…PGAVPGLRVR (107 aa)).

This sequence belongs to the class-I aminoacyl-tRNA synthetase family. MetG type 1 subfamily. As to quaternary structure, homodimer. Requires Zn(2+) as cofactor.

It localises to the cytoplasm. It catalyses the reaction tRNA(Met) + L-methionine + ATP = L-methionyl-tRNA(Met) + AMP + diphosphate. In terms of biological role, is required not only for elongation of protein synthesis but also for the initiation of all mRNA translation through initiator tRNA(fMet) aminoacylation. The protein is Methionine--tRNA ligase of Methylibium petroleiphilum (strain ATCC BAA-1232 / LMG 22953 / PM1).